The primary structure comprises 203 residues: Recombination protein RecR (203 aa).

Residues 58-73 (CDYCGNLDVVSICNIC) form a C4-type zinc finger. Positions 81 to 177 (SIIAIVESVA…KISKLASGIP (97 aa)) constitute a Toprim domain.

It belongs to the RecR family.

In terms of biological role, may play a role in DNA repair. It seems to be involved in an RecBC-independent recombinational process of DNA repair. It may act with RecF and RecO. The chain is Recombination protein RecR from Orientia tsutsugamushi (strain Boryong) (Rickettsia tsutsugamushi).